We begin with the raw amino-acid sequence, 311 residues long: uncharacterized protein (311 aa).

This is an uncharacterized protein from Bacillus subtilis (strain 168).